The primary structure comprises 163 residues: Nucleotide-binding protein MAV_4575 (163 aa).

It belongs to the YajQ family.

Nucleotide-binding protein. This Mycobacterium avium (strain 104) protein is Nucleotide-binding protein MAV_4575.